A 435-amino-acid chain; its full sequence is Probable E3 ubiquitin-protein ligase makorin-1 (435 aa).

2 C3H1-type zinc fingers span residues 18–45 and 48–75; these read WTKH…HDLT and KPAA…HCKP. The interval 81–109 is disordered; it reads LPAPQMLPLPSASLAGPSDPEPSGPTPVP. Over residues 99–108 the composition is skewed to pro residues; the sequence is DPEPSGPTPV. The segment at 155-182 adopts a C3H1-type 3 zinc-finger fold; that stretch reads QLRKQLCPYAAVGECRYGINCAYLHGDV. Residues 183–210 form a makorin-type Cys-His region; the sequence is CYMCGLQVLHPTDNNQRSEHTKACIEAH. The RING-type zinc finger occupies 228–282; it reads CGVCMEVVFEKANPSERRFGILSNCSHCYCLKCIRKWRSAKQFESKIIKSCPECR. A C3H1-type 4 zinc finger spans residues 311-340; that stretch reads GMGSKPCRYFDEGRGTCPFGSNCFYKHAFP. The tract at residues 345–369 is disordered; sequence EEAQPQRRQTGSNSRNRNSRRTPLW.

As to expression, weakly expressed in adult brain, heart and kidney.

The enzyme catalyses S-ubiquitinyl-[E2 ubiquitin-conjugating enzyme]-L-cysteine + [acceptor protein]-L-lysine = [E2 ubiquitin-conjugating enzyme]-L-cysteine + N(6)-ubiquitinyl-[acceptor protein]-L-lysine.. Its pathway is protein modification; protein ubiquitination. E3 ubiquitin ligase catalyzing the covalent attachment of ubiquitin moieties onto substrate proteins. This chain is Probable E3 ubiquitin-protein ligase makorin-1, found in Seriola quinqueradiata (Five-ray yellowtail).